The following is a 74-amino-acid chain: Kappa-stichotoxin-Sgt4a (74 aa).

Residues 1-22 form the signal peptide; it reads MKFQVIAAVLLIEFCLCVVVTA. Positions 23 to 39 are excised as a propeptide; it reads RMELQDVEDVENGFQKR. The 33-residue stretch at 42–74 folds into the ShKT domain; that stretch reads CIDTIPQSRCTAFQCKHSMKYRLSFCRKTCGTC. Cystine bridges form between C42-C74, C51-C67, and C56-C71.

The protein belongs to the sea anemone type 1 potassium channel toxin family. Type 1a subfamily.

It localises to the secreted. The protein resides in the nematocyst. Its function is as follows. Inhibits voltage-gated potassium channels (Kv) with higher potency for Kv1.1/KCNA1 and Kv1.3/KCNA3. The sequence is that of Kappa-stichotoxin-Sgt4a from Stichodactyla gigantea (Giant carpet anemone).